Here is a 465-residue protein sequence, read N- to C-terminus: Zinc finger and BTB domain-containing protein 32 (465 aa).

Residues 29–87 form the BTB domain; the sequence is CDTLITVGGLEFPAHSLVLAGASPRLGCRGRWALVEDISPSTFAQILTFVYGESIELQP. Disordered stretches follow at residues 111 to 179 and 285 to 310; these read RAQK…EMAG and QNQL…PWQI. Basic and acidic residues-rich tracts occupy residues 123 to 139 and 147 to 176; these read PGLK…RGSE and EKQK…ERPE. 3 consecutive C2H2-type zinc fingers follow at residues 350-372, 378-400, and 405-427; these read YSCS…YRVH, FSCS…LRTH, and YRCP…MRGH.

The protein belongs to the krueppel C2H2-type zinc-finger protein family. As to quaternary structure, homodimer (via PTB domain). Interacts with the N-terminal of FANCC. Interacts with ZBTB16. Interacts with GATA3. In terms of tissue distribution, isoform 1 is testis-specific and is not expressed in lymphoid organs such as thymus or spleen. Isoform 2 is expressed in both B- and T-lymphoid cells.

The protein resides in the nucleus. Its function is as follows. DNA-binding protein that binds to the to a 5'-TGTACAGTGT-3' core sequence. May function as a transcriptional transactivator and transcriptional repressor. Probably exerts its repressor effect by preventing GATA3 from binding to DNA. May play a role in regulating the differentiation and activation of helper T-cells. The chain is Zinc finger and BTB domain-containing protein 32 (Zbtb32) from Mus musculus (Mouse).